We begin with the raw amino-acid sequence, 306 residues long: MSVVDQKQQYNLNKLQKRLRRDVGQAIADFNMIEEGDRIMVCLSGGKDSYTLLSILQNLQKSAPVNFSLVAVNLDQKQPGFPEHILPAYLGELGVEYKIVEENTYGIVKEKIPEGKTTCSLCSRLRRGILYRTATELGATKIALGHHRDDILQTLFLNMFYGGKLKGMPPKLMSDDGKHIVIRPLAYCREKDIERYATAKAFPIIPCNLCGSQPNLQRQVIKDMLREWDKRYPGRIETMFRAVQNVVPSHLSDFNLFDFKSITHGSEVIDGGDLAFDREELPMQPVVDIEDQPNYQSERLDIIEVK.

The PP-loop motif motif lies at 44–49; the sequence is SGGKDS. [4Fe-4S] cluster-binding residues include cysteine 119, cysteine 122, and cysteine 210.

This sequence belongs to the TtcA family. As to quaternary structure, homodimer. Mg(2+) serves as cofactor. The cofactor is [4Fe-4S] cluster.

It is found in the cytoplasm. The enzyme catalyses cytidine(32) in tRNA + S-sulfanyl-L-cysteinyl-[cysteine desulfurase] + AH2 + ATP = 2-thiocytidine(32) in tRNA + L-cysteinyl-[cysteine desulfurase] + A + AMP + diphosphate + H(+). The protein operates within tRNA modification. In terms of biological role, catalyzes the ATP-dependent 2-thiolation of cytidine in position 32 of tRNA, to form 2-thiocytidine (s(2)C32). The sulfur atoms are provided by the cysteine/cysteine desulfurase (IscS) system. The protein is tRNA-cytidine(32) 2-sulfurtransferase of Photorhabdus laumondii subsp. laumondii (strain DSM 15139 / CIP 105565 / TT01) (Photorhabdus luminescens subsp. laumondii).